The primary structure comprises 176 residues: Alkyl hydroperoxide reductase AhpD (176 aa).

Cysteine 131 (proton donor) is an active-site residue. Cysteine 131 and cysteine 134 are oxidised to a cystine. Residue cysteine 134 is the Cysteine sulfenic acid (-SOH) intermediate of the active site.

This sequence belongs to the AhpD family.

It catalyses the reaction N(6)-[(R)-dihydrolipoyl]-L-lysyl-[lipoyl-carrier protein] + a hydroperoxide = N(6)-[(R)-lipoyl]-L-lysyl-[lipoyl-carrier protein] + an alcohol + H2O. Antioxidant protein with alkyl hydroperoxidase activity. Required for the reduction of the AhpC active site cysteine residues and for the regeneration of the AhpC enzyme activity. This chain is Alkyl hydroperoxide reductase AhpD, found in Methylobacterium sp. (strain 4-46).